Reading from the N-terminus, the 1960-residue chain is Transcription factor 20 (1960 aa).

Polar residues predominate over residues 1–18 (MQSFREQSSYHGNQQSYP). Residues 1 to 287 (MQSFREQSSY…GSNAQAYGTQ (287 aa)) are disordered. Positions 42-60 (GGTGGSSGSSGSGSGGGRR) are enriched in gly residues. Arg60 is modified (omega-N-methylarginine). Low complexity predominate over residues 61–75 (GAAAAAAAMASETSG). Positions 122-131 (QGSSFGNQYG) are enriched in polar residues. Positions 164–192 (SAQYQQQASSQQQQQQVQQLRQQLYQSHQ) are enriched in low complexity. Polar residues predominate over residues 193–219 (PLPQATGQPASSSSHLQPMQRPSTLPS). Residues 236–259 (QSSASSSSSSSFPSPQRFSQSGQS) are compositionally biased toward low complexity. 2 stretches are compositionally biased toward polar residues: residues 260-270 (YDGSYNVNAGS) and 277-287 (VGSNAQAYGTQ). Lys304 participates in a covalent cross-link: Glycyl lysine isopeptide (Lys-Gly) (interchain with G-Cter in SUMO2). 2 disordered regions span residues 305 to 328 (IPQG…SQHV) and 360 to 392 (FHQN…LMQT). Composition is skewed to low complexity over residues 306–322 (PQGT…QQQQ) and 368–388 (SNPS…TPSP). Phosphoserine occurs at positions 419 and 430. Residues 476 to 748 (SDALTPQKKT…HGERKGRNEK (273 aa)) form a disordered region. 2 stretches are compositionally biased toward polar residues: residues 497–508 (SCTNSEGSSQPE) and 537–547 (LSGQSTSSDTT). 4 positions are modified to phosphoserine: Ser538, Ser559, Ser574, and Ser583. Lys602 is subject to N6-acetyllysine. Over residues 616 to 628 (RVEKPGGQDKGSQ) the composition is skewed to basic and acidic residues. Ser640 carries the post-translational modification Phosphoserine. A compositionally biased stretch (low complexity) spans 665-677 (GNKNGDNNSNHNG). A compositionally biased stretch (polar residues) spans 693–702 (TSRTEPSKSP). Residues Lys710, Lys733, Lys748, Lys823, Lys832, and Lys844 each participate in a glycyl lysine isopeptide (Lys-Gly) (interchain with G-Cter in SUMO2) cross-link. The span at 732 to 748 (EKGDFTGHGERKGRNEK) shows a compositional bias: basic and acidic residues. A Phosphoserine modification is found at Ser871. Residues Lys920 and Lys922 each participate in a glycyl lysine isopeptide (Lys-Gly) (interchain with G-Cter in SUMO2) cross-link. The disordered stretch occupies residues 920 to 1037 (KLKSQSGQIK…GDPHHMNPHM (118 aa)). Lys929 is covalently cross-linked (Glycyl lysine isopeptide (Lys-Gly) (interchain with G-Cter in SUMO1); alternate). Lys929 participates in a covalent cross-link: Glycyl lysine isopeptide (Lys-Gly) (interchain with G-Cter in SUMO2); alternate. The span at 936-945 (SKSQASFNNK) shows a compositional bias: polar residues. Over residues 946–961 (KSGDHCHPPSIKHESY) the composition is skewed to basic and acidic residues. Lys957 participates in a covalent cross-link: Glycyl lysine isopeptide (Lys-Gly) (interchain with G-Cter in SUMO2). Phosphoserine is present on residues Ser966 and Ser1005. Lys1015 participates in a covalent cross-link: Glycyl lysine isopeptide (Lys-Gly) (interchain with G-Cter in SUMO2). The residue at position 1024 (Arg1024) is an Omega-N-methylarginine. Ser1053 bears the Phosphoserine mark. Residues Lys1086, Lys1098, Lys1137, Lys1173, Lys1178, Lys1183, Lys1210, Lys1231, Lys1267, and Lys1274 each participate in a glycyl lysine isopeptide (Lys-Gly) (interchain with G-Cter in SUMO2) cross-link. Disordered regions lie at residues 1110 to 1142 (AAAQ…DKDG), 1162 to 1285 (RCLM…GRLL), and 1303 to 1331 (SHSQ…CPAV). Basic and acidic residues predominate over residues 1130 to 1142 (DRVRSPLKNDKDG). The leucine-zipper stretch occupies residues 1170–1191 (LPNKGMELKHGSQKLQESCWDL). The short motif at 1254-1268 (RRRVRSFISPIPSKR) is the Nuclear localization signal element. The span at 1304 to 1318 (HSQDIKSIPKRDSSK) shows a compositional bias: basic and acidic residues. Phosphoserine is present on Ser1305. A Glycyl lysine isopeptide (Lys-Gly) (interchain with G-Cter in SUMO2) cross-link involves residue Lys1309. The residue at position 1335 (Ser1335) is a Phosphoserine. A Glycyl lysine isopeptide (Lys-Gly) (interchain with G-Cter in SUMO2) cross-link involves residue Lys1338. At Ser1361 the chain carries Phosphoserine. Residues 1384-1607 (DILSLKSGPP…TKQAVPIVEP (224 aa)) are disordered. Residues Lys1389, Lys1409, Lys1428, and Lys1446 each participate in a glycyl lysine isopeptide (Lys-Gly) (interchain with G-Cter in SUMO2) cross-link. Over residues 1424 to 1451 (LHVEKPLPRSSEEWRGSVDDKVKTETHA) the composition is skewed to basic and acidic residues. The segment covering 1464-1477 (MTSTTSQKPGSNQG) has biased composition (polar residues). A Glycyl lysine isopeptide (Lys-Gly) (interchain with G-Cter in SUMO2) cross-link involves residue Lys1510. Ser1522 is subject to Phosphoserine. Lys1524 participates in a covalent cross-link: Glycyl lysine isopeptide (Lys-Gly) (interchain with G-Cter in SUMO2). A DNA-binding region (a.T hook) is located at residues 1537–1551 (GKKKGRPIGSVNKQK). Residues 1555 to 1566 (QPPPPPPQPPQI) are compositionally biased toward pro residues. The Nuclear localization signal motif lies at 1576 to 1600 (KPKKQRQRRERRKPGAQPRKRKTKQ). Residues 1578 to 1599 (KKQRQRRERRKPGAQPRKRKTK) are compositionally biased toward basic residues. Residue Lys1613 forms a Glycyl lysine isopeptide (Lys-Gly) (interchain with G-Cter in SUMO2) linkage. 2 disordered regions span residues 1660 to 1683 (LVRG…KALP) and 1732 to 1839 (TLPK…PELE). Ser1669 carries the post-translational modification Phosphoserine. 3 positions are modified to phosphothreonine: Thr1671, Thr1762, and Thr1764. The short motif at 1785-1792 (RFKRRHRS) is the Nuclear localization signal element. A C2HC pre-PHD-type; degenerate zinc finger spans residues 1829 to 1865 (PTTSEGGPELELQIPELPLDSNEFWVHEGCILWANGI). The PHD-type zinc finger occupies 1885 to 1933 (MKCSHCQEAGATLGCYNKGCSFRYHYPCAIDADCLLHEENFSVRCPKHK). The segment at 1939 to 1960 (PLPPLQNKTAKGSLSTEQSERG) is disordered. The span at 1944–1960 (QNKTAKGSLSTEQSERG) shows a compositional bias: polar residues.

As to quaternary structure, homodimer. Interacts with RNF4 and JUN. As to expression, expressed in most tissues, except in ovary and prostate. Isoform 1 is exclusively expressed in brain, heart and testis, and this form predominates in liver and kidney. Isoform 2 predominates in lung.

The protein localises to the nucleus. Transcriptional activator that binds to the regulatory region of MMP3 and thereby controls stromelysin expression. It stimulates the activity of various transcriptional activators such as JUN, SP1, PAX6 and ETS1, suggesting a function as a coactivator. The chain is Transcription factor 20 (TCF20) from Homo sapiens (Human).